We begin with the raw amino-acid sequence, 312 residues long: HPr kinase/phosphorylase (312 aa).

Residues histidine 139 and lysine 160 contribute to the active site. 154 to 161 lines the ATP pocket; that stretch reads GRSGIGKS. Serine 161 is a Mg(2+) binding site. The active-site Proton acceptor; for phosphorylation activity. Proton donor; for dephosphorylation activity is aspartate 178. The segment at 201-210 is important for the catalytic mechanism of both phosphorylation and dephosphorylation; it reads MEIRGLGIIN. A Mg(2+)-binding site is contributed by glutamate 202. Arginine 245 is an active-site residue. Residues 266 to 271 are important for the catalytic mechanism of dephosphorylation; sequence PISPGR.

It belongs to the HPrK/P family. As to quaternary structure, homohexamer, arranged as bilayered trimers. Mg(2+) serves as cofactor.

The enzyme catalyses [HPr protein]-L-serine + ATP = [HPr protein]-O-phospho-L-serine + ADP + H(+). It catalyses the reaction [HPr protein]-O-phospho-L-serine + phosphate + H(+) = [HPr protein]-L-serine + diphosphate. With respect to regulation, contrary to HPrK/P of B.subtilis and other bacteria, that of M.pneumoniae is active as a kinase at very low ATP concentrations in the absence of fructose 1,6-bisphosphate (FBP). Kinase activity is slightly activated by FBP, and inhibited by inorganic phosphate (Pi), but FBP prevents kinase inhibition by Pi. Dephosphorylation of P-Ser-HPr by M.pneumoniae HPrK/P is strictly dependent on the presence of Pi, and is inhibited by FBP. This unique mode of control of HPrK/P activity is proposed to reflect the parasitic lifestyle of M.pneumoniae, that is strictly adapted to its ecological niche on nutrient-rich human mucous membranes. Its function is as follows. Is a metabolite-sensitive enzyme that catalyzes the ATP-as well as probably the pyrophosphate-dependent phosphorylation of Ser-47 in HPr, a phosphocarrier protein of the phosphoenolpyruvate-dependent sugar phosphotransferase system (PTS). HprK/P also catalyzes the pyrophosphate-producing, inorganic phosphate-dependent dephosphorylation (phosphorolysis) of seryl-phosphorylated HPr (P-Ser-HPr). The regulatory role of HPrK/P in the physiology of M.pneumoniae is not known yet. This Mycoplasma pneumoniae (strain ATCC 29342 / M129 / Subtype 1) (Mycoplasmoides pneumoniae) protein is HPr kinase/phosphorylase (hprK).